We begin with the raw amino-acid sequence, 662 residues long: Protein Aster-C (662 aa).

Residues 1–34 are disordered; it reads MEGAPTVRQVMNEGDSSLATDLQEDVEENPSPTV. A GRAM domain is found at 69–136; that stretch reads EEYRRQFTHL…KNITFMTKEK (68 aa). 2 disordered regions span residues 212–237 and 249–284; these read SIED…EKLS and RVSE…LPTL. The span at 265–276 shows a compositional bias: basic and acidic residues; sequence LGKEESQNEKQT. The VASt domain occupies 326–497; sequence HGRLFINRIF…DLLIEESVLN (172 aa). Residues 557–577 traverse the membrane as a helical segment; the sequence is LIVVMSIFVLLLVLLNVTLFL.

The protein localises to the endoplasmic reticulum membrane. It localises to the cell membrane. In terms of biological role, cholesterol transporter that mediates non-vesicular transport of cholesterol from the plasma membrane (PM) to the endoplasmic reticulum (ER). Contains unique domains for binding cholesterol and the PM, thereby serving as a molecular bridge for the transfer of cholesterol from the PM to the ER. Plays a crucial role in cholesterol homeostasis and has the unique ability to localize to the PM based on the level of membrane cholesterol. In lipid-poor conditions localizes to the ER membrane and in response to excess cholesterol in the PM is recruited to the endoplasmic reticulum-plasma membrane contact sites (EPCS) which is mediated by the GRAM domain. At the EPCS, the sterol-binding VASt/ASTER domain binds to the cholesterol in the PM and facilitates its transfer from the PM to ER. This Homo sapiens (Human) protein is Protein Aster-C (GRAMD1C).